The sequence spans 345 residues: Green-sensitive opsin (345 aa).

At 1–37 (MENGTEGKNFYIPMNNRTGLVRSPYEYPQYYLADPWQ) the chain is on the extracellular side. Asn3 and Asn16 each carry an N-linked (GlcNAc...) asparagine glycan. A helical membrane pass occupies residues 38-62 (FKLLGIYMFFLILTGFPINALTLVV). The Cytoplasmic segment spans residues 63-74 (TAQNKKLRQPLN). A helical transmembrane segment spans residues 75-100 (FILVNLAVAGLIMVCFGFTVCIYSCM). Topologically, residues 101–114 (VGYFSLGPLGCTIE) are extracellular. Residues Cys111 and Cys188 are joined by a disulfide bond. The chain crosses the membrane as a helical span at residues 115–134 (GFMATLGGQVSLWSLVVLAI). Residues 135-153 (ERYIVVCKPMGSFKFTATH) lie on the Cytoplasmic side of the membrane. Residues 154–177 (SAAGCAFTWIMASSCAVPPLVGWS) form a helical membrane-spanning segment. Residues 178–203 (RYIPEGIQVSCGPDYYTLAPGFNNES) are Extracellular-facing. Asn201 carries N-linked (GlcNAc...) asparagine glycosylation. The helical transmembrane segment at 204–231 (FVMYMFSCHFCVPVFTIFFTYGSLVMTV) threads the bilayer. At 232-253 (KAAAAQQQDSASTQKAEKEVTR) the chain is on the cytoplasmic side. The helical transmembrane segment at 254–277 (MCFLMVLGFLLAWVPYASYAAWIF) threads the bilayer. Topologically, residues 278–285 (FNRGAAFS) are extracellular. A helical transmembrane segment spans residues 286-310 (AMSMAIPSFFSKSSALFNPIIYILL). Lys297 is subject to N6-(retinylidene)lysine. Residues 311 to 345 (NKQFRNCMLATIGMGGMVEDETSVSTSKTEVSTAA) are Cytoplasmic-facing.

This sequence belongs to the G-protein coupled receptor 1 family. Opsin subfamily. In terms of processing, phosphorylated on some or all of the serine and threonine residues present in the C-terminal region. The color pigments are found in the cone photoreceptor cells.

It localises to the membrane. Its function is as follows. Visual pigments are the light-absorbing molecules that mediate vision. They consist of an apoprotein, opsin, covalently linked to cis-retinal. The chain is Green-sensitive opsin from Oryzias latipes (Japanese rice fish).